The following is a 126-amino-acid chain: Protein ApaG (126 aa).

Residues 2–126 (SALDDSIRVE…FRLALPGLLH (125 aa)) enclose the ApaG domain.

The sequence is that of Protein ApaG from Shewanella sp. (strain MR-4).